Here is a 427-residue protein sequence, read N- to C-terminus: MLVKADMTKDIAQVMAEVGRKAKAAAAPLSIATSEQKNKALNAAADAILEARADILEANRLDLANAEKNGMAASFVDRLTLNEARIDAIAEDIRAIATLPDPVGEVIAEWDRPNGLHIERVRTPLGVIGVIYESRPNVTADAGALCLKAGNAVILRGGSDSAHSSAAIHKALVKGLEAANLPADAIQIVPVTDRAAVGEMLKGLGGAIDVIVPRGGKSLVARVQSEARVPVFAHLEGICHLYIDKSADLDMARRIALDAKMRRTGICGAAETLLVDRAVASTHLAPILGDLAAGGCEIRGSAEVLALYPAAKPATEEDWSTEYLDAIISVALVDGISGAIDHINRYSSHHTEAIVAEDAQTVARFFNEIDSAILLHNASTQFADGGEFGMGAEIGIATGKMHARGPVGVEQLTSFKYRVRGSGQVRG.

This sequence belongs to the gamma-glutamyl phosphate reductase family.

Its subcellular location is the cytoplasm. It carries out the reaction L-glutamate 5-semialdehyde + phosphate + NADP(+) = L-glutamyl 5-phosphate + NADPH + H(+). The protein operates within amino-acid biosynthesis; L-proline biosynthesis; L-glutamate 5-semialdehyde from L-glutamate: step 2/2. Catalyzes the NADPH-dependent reduction of L-glutamate 5-phosphate into L-glutamate 5-semialdehyde and phosphate. The product spontaneously undergoes cyclization to form 1-pyrroline-5-carboxylate. The sequence is that of Gamma-glutamyl phosphate reductase from Brucella canis (strain ATCC 23365 / NCTC 10854 / RM-666).